We begin with the raw amino-acid sequence, 163 residues long: MNLFSMPLGQMLALSEGEGGLFDFNATLPLMALQFILLTVILTFVFYKPIGNLLEEREAYINGNLSDASAKLLQADELCKQYEEQLKDAKADAQSCIADAETEAKQVVALELAQARKDAASLVEQVNKELEAQKELALKQLEAQIDELSQLIKEKLLGKQAIL.

Residues 26-46 (ATLPLMALQFILLTVILTFVF) form a helical membrane-spanning segment.

It belongs to the ATPase B chain family. In terms of assembly, F-type ATPases have 2 components, F(1) - the catalytic core - and F(0) - the membrane proton channel. F(1) has five subunits: alpha(3), beta(3), gamma(1), delta(1), epsilon(1). F(0) has four main subunits: a(1), b(1), b'(1) and c(10-14). The alpha and beta chains form an alternating ring which encloses part of the gamma chain. F(1) is attached to F(0) by a central stalk formed by the gamma and epsilon chains, while a peripheral stalk is formed by the delta, b and b' chains.

It is found in the plastid. The protein localises to the chloroplast thylakoid membrane. F(1)F(0) ATP synthase produces ATP from ADP in the presence of a proton or sodium gradient. F-type ATPases consist of two structural domains, F(1) containing the extramembraneous catalytic core and F(0) containing the membrane proton channel, linked together by a central stalk and a peripheral stalk. During catalysis, ATP synthesis in the catalytic domain of F(1) is coupled via a rotary mechanism of the central stalk subunits to proton translocation. Functionally, component of the F(0) channel, it forms part of the peripheral stalk, linking F(1) to F(0). The b'-subunit is a diverged and duplicated form of b found in plants and photosynthetic bacteria. The sequence is that of ATP synthase subunit b', chloroplastic from Ochrosphaera neapolitana.